Here is a 124-residue protein sequence, read N- to C-terminus: Urease subunit beta (124 aa).

Belongs to the urease beta subunit family. As to quaternary structure, heterotrimer of UreA (gamma), UreB (beta) and UreC (alpha) subunits. Three heterotrimers associate to form the active enzyme.

Its subcellular location is the cytoplasm. It catalyses the reaction urea + 2 H2O + H(+) = hydrogencarbonate + 2 NH4(+). It functions in the pathway nitrogen metabolism; urea degradation; CO(2) and NH(3) from urea (urease route): step 1/1. This is Urease subunit beta from Ureaplasma urealyticum serovar 10 (strain ATCC 33699 / Western).